The sequence spans 275 residues: TATA-box-binding protein (275 aa).

Disordered stretches follow at residues 23 to 45 (EDES…FGMN) and 73 to 92 (GSMS…HTPA). 2 consecutive repeat copies span residues 103–179 (LENI…ARIV) and 193–270 (IQNM…YPIL).

This sequence belongs to the TBP family. Belongs to the TFIID complex together with the TBP-associated factors (TAFs). Binds DNA as monomer.

Its subcellular location is the nucleus. Functionally, general transcription factor that functions at the core of the DNA-binding multiprotein factor TFIID. Binding of TFIID to the TATA box is the initial transcriptional step of the pre-initiation complex (PIC), playing a role in the activation of eukaryotic genes transcribed by RNA polymerase II. The chain is TATA-box-binding protein from Artemia franciscana (Brine shrimp).